A 519-amino-acid chain; its full sequence is Ion-translocating oxidoreductase complex subunit C (519 aa).

4Fe-4S ferredoxin-type domains lie at 372–401 (ETPEAKTMPCIRCGRCVQGCPVGLTPFELN) and 411–440 (GAAKVGLMDCLACGCCSYNCPANLPLVQSF). Residues Cys381, Cys384, Cys387, Cys391, Cys420, Cys423, Cys426, and Cys430 each contribute to the [4Fe-4S] cluster site. A disordered region spans residues 494–519 (KAEEAAAAAAMPPPATATAIQGEATP).

This sequence belongs to the 4Fe4S bacterial-type ferredoxin family. RnfC subfamily. In terms of assembly, the complex is composed of six subunits: RnfA, RnfB, RnfC, RnfD, RnfE and RnfG. The cofactor is [4Fe-4S] cluster.

The protein localises to the cellular chromatophore membrane. In terms of biological role, part of a membrane-bound complex that couples electron transfer with translocation of ions across the membrane. Required for nitrogen fixation. Involved in electron transfer to nitrogenase. The polypeptide is Ion-translocating oxidoreductase complex subunit C (Rhodobacter capsulatus (Rhodopseudomonas capsulata)).